The chain runs to 99 residues: DNA-directed RNA polymerase subunit omega (99 aa).

Residues 1–10 show a composition bias toward low complexity; the sequence is MSSTSAASAA. The tract at residues 1-20 is disordered; sequence MSSTSAASAAGQGALPAYDT.

The protein belongs to the RNA polymerase subunit omega family. The RNAP catalytic core consists of 2 alpha, 1 beta, 1 beta' and 1 omega subunit. When a sigma factor is associated with the core the holoenzyme is formed, which can initiate transcription.

The catalysed reaction is RNA(n) + a ribonucleoside 5'-triphosphate = RNA(n+1) + diphosphate. Functionally, promotes RNA polymerase assembly. Latches the N- and C-terminal regions of the beta' subunit thereby facilitating its interaction with the beta and alpha subunits. The protein is DNA-directed RNA polymerase subunit omega of Rhodococcus erythropolis (strain PR4 / NBRC 100887).